Reading from the N-terminus, the 950-residue chain is Inactive atromentin synthetase invA4 (950 aa).

Residues 37-460 (SRAVSQYPNH…SGRIKDTVVV (424 aa)) are adenylation (A) domain. The Carrier domain maps to 592–670 (APSTETEKTL…TLAKYVDSLV (79 aa)). Positions 597-667 (TEKTLAGIYA…EIITLAKYVD (71 aa)) are thiolation and peptide carrier (T) domain. Residue S629 is modified to O-(pantetheine 4'-phosphoryl)serine. Residues 693–797 (PIFMVHPGIG…GIIDMIPHHM (105 aa)) form a thioesterase (TE) domain region.

This sequence belongs to the ATP-dependent AMP-binding enzyme family.

Inactive atromentin synthetase homolog. Does not accept 4-hydroxyphenylpyruvate (4-HPP) as substrate. The polypeptide is Inactive atromentin synthetase invA4 (invA4) (Paxillus involutus (Naked brimcap)).